Reading from the N-terminus, the 488-residue chain is 3-octaprenyl-4-hydroxybenzoate carboxy-lyase (488 aa).

Asn-172 provides a ligand contact to Mn(2+). Prenylated FMN-binding positions include 175–177 (IYR), 189–191 (RWL), and 194–195 (RG). Glu-238 contacts Mn(2+). The active-site Proton donor is the Asp-287.

Belongs to the UbiD family. In terms of assembly, homohexamer. Prenylated FMN serves as cofactor. Mn(2+) is required as a cofactor.

The protein resides in the cell membrane. It catalyses the reaction a 4-hydroxy-3-(all-trans-polyprenyl)benzoate + H(+) = a 2-(all-trans-polyprenyl)phenol + CO2. The protein operates within cofactor biosynthesis; ubiquinone biosynthesis. Its function is as follows. Catalyzes the decarboxylation of 3-octaprenyl-4-hydroxy benzoate to 2-octaprenylphenol, an intermediate step in ubiquinone biosynthesis. This is 3-octaprenyl-4-hydroxybenzoate carboxy-lyase from Pseudomonas syringae pv. syringae (strain B728a).